We begin with the raw amino-acid sequence, 117 residues long: Glycoprotein hormones alpha chain (117 aa).

The signal sequence occupies residues 1–23 (MGSVKSAGLSLLLLSFLLYVADS). 5 disulfide bridges follow: Cys-34–Cys-57, Cys-37–Cys-86, Cys-54–Cys-107, Cys-58–Cys-109, and Cys-85–Cys-112. Residues Asn-78 and Asn-103 are each glycosylated (N-linked (GlcNAc...) asparagine).

Belongs to the glycoprotein hormones subunit alpha family. As to quaternary structure, heterodimer. Glycoprotein hormones are heterodimers composed of a common alpha chain described here and a unique beta chain which confers their biological specificity to the different hormones.

It localises to the secreted. Its function is as follows. Shared alpha chain of heterodimeric glycoprotein hormones. These hormones bind specific receptors on target cells that in turn activate downstream signaling pathways. Involved in gametogenesis and steroidogenesis. This chain is Glycoprotein hormones alpha chain (cga), found in Acanthopagrus latus (Yellowfin seabream).